Consider the following 932-residue polypeptide: Glycine dehydrogenase (decarboxylating) (932 aa).

An N6-(pyridoxal phosphate)lysine modification is found at Lys-685.

It belongs to the GcvP family. The glycine cleavage system is composed of four proteins: P, T, L and H. Requires pyridoxal 5'-phosphate as cofactor.

It carries out the reaction N(6)-[(R)-lipoyl]-L-lysyl-[glycine-cleavage complex H protein] + glycine + H(+) = N(6)-[(R)-S(8)-aminomethyldihydrolipoyl]-L-lysyl-[glycine-cleavage complex H protein] + CO2. In terms of biological role, the glycine cleavage system catalyzes the degradation of glycine. The P protein binds the alpha-amino group of glycine through its pyridoxal phosphate cofactor; CO(2) is released and the remaining methylamine moiety is then transferred to the lipoamide cofactor of the H protein. In Brucella abortus (strain S19), this protein is Glycine dehydrogenase (decarboxylating).